A 277-amino-acid chain; its full sequence is Energy-coupling factor transporter ATP-binding protein EcfA1 (277 aa).

The ABC transporter domain occupies 5-240; sequence LEVENLVFKY…SEDMVEIGLD (236 aa). 40–47 is an ATP binding site; the sequence is GQNGSGKS.

The protein belongs to the ABC transporter superfamily. Energy-coupling factor EcfA family. In terms of assembly, forms a stable energy-coupling factor (ECF) transporter complex composed of 2 membrane-embedded substrate-binding proteins (S component), 2 ATP-binding proteins (A component) and 2 transmembrane proteins (T component).

It localises to the cell membrane. In terms of biological role, ATP-binding (A) component of a common energy-coupling factor (ECF) ABC-transporter complex. Unlike classic ABC transporters this ECF transporter provides the energy necessary to transport a number of different substrates. This Lactococcus lactis subsp. lactis (strain IL1403) (Streptococcus lactis) protein is Energy-coupling factor transporter ATP-binding protein EcfA1.